The following is a 393-amino-acid chain: CCA-adding enzyme (393 aa).

Positions 27 and 30 each coordinate ATP. The CTP site is built by glycine 27 and arginine 30. Residues aspartate 40 and aspartate 42 each contribute to the Mg(2+) site. Residues arginine 111, aspartate 154, arginine 157, arginine 160, and arginine 163 each coordinate ATP. Positions 111, 154, 157, 160, and 163 each coordinate CTP.

It belongs to the tRNA nucleotidyltransferase/poly(A) polymerase family. Bacterial CCA-adding enzyme type 3 subfamily. Homodimer. Requires Mg(2+) as cofactor.

The enzyme catalyses a tRNA precursor + 2 CTP + ATP = a tRNA with a 3' CCA end + 3 diphosphate. The catalysed reaction is a tRNA with a 3' CCA end + 2 CTP + ATP = a tRNA with a 3' CCACCA end + 3 diphosphate. Its function is as follows. Catalyzes the addition and repair of the essential 3'-terminal CCA sequence in tRNAs without using a nucleic acid template. Adds these three nucleotides in the order of C, C, and A to the tRNA nucleotide-73, using CTP and ATP as substrates and producing inorganic pyrophosphate. tRNA 3'-terminal CCA addition is required both for tRNA processing and repair. Also involved in tRNA surveillance by mediating tandem CCA addition to generate a CCACCA at the 3' terminus of unstable tRNAs. While stable tRNAs receive only 3'-terminal CCA, unstable tRNAs are marked with CCACCA and rapidly degraded. The sequence is that of CCA-adding enzyme from Listeria monocytogenes serotype 4b (strain F2365).